The sequence spans 37 residues: Photosystem II reaction center protein T (37 aa).

Residues 3-23 (ALVYTFLLVSTLGILFFAIFF) form a helical membrane-spanning segment.

It belongs to the PsbT family. PSII is composed of 1 copy each of membrane proteins PsbA, PsbB, PsbC, PsbD, PsbE, PsbF, PsbH, PsbI, PsbJ, PsbK, PsbL, PsbM, PsbT, PsbY, PsbZ, Psb30/Ycf12, at least 3 peripheral proteins of the oxygen-evolving complex and a large number of cofactors. It forms dimeric complexes.

Its subcellular location is the plastid. It is found in the chloroplast thylakoid membrane. Its function is as follows. Found at the monomer-monomer interface of the photosystem II (PS II) dimer, plays a role in assembly and dimerization of PSII. PSII is a light-driven water plastoquinone oxidoreductase, using light energy to abstract electrons from H(2)O, generating a proton gradient subsequently used for ATP formation. The polypeptide is Photosystem II reaction center protein T (Ephedra sinica (Chinese ephedra)).